We begin with the raw amino-acid sequence, 929 residues long: Synaptopodin (929 aa).

N-acetylmethionine is present on methionine 1. The span at 1 to 12 (MLGPHLPPPPLA) shows a compositional bias: pro residues. The interval 1–260 (MLGPHLPPPP…EASLLRHLEK (260 aa)) is disordered. 2 stretches are compositionally biased toward basic and acidic residues: residues 60–69 (GVSRSGDDSA) and 91–110 (SREEQGASQHDDRASQDWDV). Serine 140 bears the Phosphoserine mark. Residues 142-151 (TEKDLKEAKA) show a composition bias toward basic and acidic residues. Positions 152–170 (RSQQIAAQLTTPPSSNSRG) are enriched in polar residues. Serine 207 carries the phosphoserine modification. Residues 224–234 (EPGPPRHPSPQ) show a composition bias toward pro residues. Serine 263 is modified (phosphoserine). The interval 285–389 (GLHLSQNREA…TLCADGQPQA (105 aa)) is disordered. Over residues 317 to 332 (LASPSATLTTPTSNSS) the composition is skewed to low complexity. Residue asparagine 330 is glycosylated (N-linked (GlcNAc...) asparagine). Residues 333–379 (HNPPATDVNQNPPATVVPQSLPLSSIQQNSSEAQLPSNGTGPASKPS) show a composition bias toward polar residues. Serine 501 and serine 525 each carry phosphoserine. Residues 509–558 (FGEKAPAPQPPSLPDRSPRPQRHIMSRSPMVERRMMGQRSPASERRPLGN) are disordered. The residue at position 560 (threonine 560) is a Phosphothreonine. Positions 562–565 (PPTY) match the PPxY motif motif. A Phosphoserine modification is found at serine 580. Positions 581–584 (PPSY) match the PPxY motif motif. Disordered stretches follow at residues 589 to 610 (PSSDPKSSHLKGQAVPASKTGI) and 630 to 726 (KPKV…KGAE). Positions 646–656 (ADEKRRQRDQG) are enriched in basic and acidic residues. Phosphoserine is present on residues serine 685, serine 702, and tyrosine 738. The segment covering 685–698 (SPAAAEEVVPEWAS) has biased composition (low complexity). Positions 740–763 (IESSSHTPELARCPSPTMSLPSSW) are disordered. Phosphothreonine is present on threonine 746. A phosphoserine mark is found at serine 754, serine 758, and serine 779. Phosphothreonine is present on threonine 783. 8 positions are modified to phosphoserine: proline 784, threonine 804, arginine 812, lysine 826, serine 833, serine 854, proline 871, and proline 894. A compositionally biased stretch (low complexity) spans 826–839 (KVSPRAASPAKPSS). The segment at 826–916 (KVSPRAASPA…RPSFSTRNAG (91 aa)) is disordered. A compositionally biased stretch (polar residues) spans 866-880 (GLYTSPGQDSLQPTA).

The protein belongs to the synaptopodin family. As to quaternary structure, interacts with BAIAP1. Interacts with actin. Interacts (via PPxY motifs) with WWC1 (via WW domains). Post-translationally, O-glycosylated. Expressed in cerebral cortex.

It localises to the cytoplasm. It is found in the cytoskeleton. The protein localises to the cell junction. The protein resides in the tight junction. Its subcellular location is the perikaryon. It localises to the cell projection. It is found in the dendritic spine. The protein localises to the postsynaptic density. The protein resides in the synapse. Its subcellular location is the cytosol. Its function is as follows. Actin-associated protein that may play a role in modulating actin-based shape and motility of dendritic spines and renal podocyte foot processes. Seems to be essential for the formation of spine apparatuses in spines of telencephalic neurons, which is involved in synaptic plasticity. This is Synaptopodin (SYNPO) from Homo sapiens (Human).